We begin with the raw amino-acid sequence, 405 residues long: Protein NCA1 (405 aa).

Positions 1–85 (MTTTSVCPFS…GNLNKDSTDS (85 aa)) are disordered. 2 stretches are compositionally biased toward basic and acidic residues: residues 13–24 (ARPDDGSTRKQG) and 37–48 (ARPDDASARKQG). Positions 76–85 (GNLNKDSTDS) are enriched in polar residues. Residues 108–142 (CMLCQALLYESSRCVPCTHVFCKVCLTRFKDCPLC) form an RING-type zinc finger. TPR repeat units lie at residues 247 to 280 (GAVL…LMKL) and 292 to 325 (SVSL…RRDA).

As to quaternary structure, interacts with the catalases CAT1, CAT2 and CAT3. This interaction is not induced by alkaline stress or H(2)O(2) and NaCl treatments. As to expression, expressed in roots, stems, leaves, flowers and siliques.

It is found in the cytoplasm. Its subcellular location is the nucleus. In terms of biological role, has holdase chaperone activity that may fold catalase to a functional structure. Not required for the peroxisome import of catalases. Required for the activity of catalases and acts mainly at the post-transcriptional level. The chain is Protein NCA1 from Arabidopsis thaliana (Mouse-ear cress).